The primary structure comprises 196 residues: Proteasome subunit beta (196 aa).

Met1 is a propeptide (removed in mature form; by autocatalysis). The active-site Nucleophile is Thr2.

Belongs to the peptidase T1B family. As to quaternary structure, the 20S proteasome core is composed of 14 alpha and 14 beta subunits that assemble into four stacked heptameric rings, resulting in a barrel-shaped structure. The two inner rings, each composed of seven catalytic beta subunits, are sandwiched by two outer rings, each composed of seven alpha subunits. The catalytic chamber with the active sites is on the inside of the barrel. Has a gated structure, the ends of the cylinder being occluded by the N-termini of the alpha-subunits. Is capped at one or both ends by the proteasome regulatory ATPase, PAN.

It is found in the cytoplasm. The enzyme catalyses Cleavage of peptide bonds with very broad specificity.. Its activity is regulated as follows. The formation of the proteasomal ATPase PAN-20S proteasome complex, via the docking of the C-termini of PAN into the intersubunit pockets in the alpha-rings, triggers opening of the gate for substrate entry. Interconversion between the open-gate and close-gate conformations leads to a dynamic regulation of the 20S proteasome proteolysis activity. Its function is as follows. Component of the proteasome core, a large protease complex with broad specificity involved in protein degradation. The protein is Proteasome subunit beta of Nanoarchaeum equitans (strain Kin4-M).